The sequence spans 540 residues: MTLNSLPVWPALQAHYEEIRDAHLRDWFAPANDRAPTRAERFTFEGGGLAADFSKNRLTDATLALLVRLAREAGVEARRDAMFAGETVNPTEGRAALHTALRANAPDAPFQAQVAAERAKMARFADAVRSGAWTGYTGKRIRHVVNIGIGGSDLGPKMVVHALHHVATPDIATHFVSNVDGADLARVLERIDPEATLAIIVSKTFTTLETMTNARSLRDWFVANGCPEGALAKHFVGVSANPAEVVKFGIAEANVFEMWDWVGGRYSLWSAVGLSIMIAIGPERFDELLAGARDMDEHFRTAPLERNLPVLQGLVGIWYRNFFGAQSYLVAPYSEALHYLPSYLQQLEMESNGKSARIDGAFVDYPTSAVTWGEPGTNGQHAFFQMLHQGPTLVPIDFIAVLTPEHPLASHHPKLLANCFAQSEALMLGRTLDEARKIAGPAKPELAPHLTFPGNRPTTTLLVDALTPRTLGALIALYEHKVLVQAAVWNINPFDQWGVELGKILGKVVEADLTAAQVDPAKHDSSTSALIARARKALGE.

The active-site Proton donor is E350. Residues H381 and K503 contribute to the active site.

It belongs to the GPI family.

It is found in the cytoplasm. The catalysed reaction is alpha-D-glucose 6-phosphate = beta-D-fructose 6-phosphate. Its pathway is carbohydrate biosynthesis; gluconeogenesis. It participates in carbohydrate degradation; glycolysis; D-glyceraldehyde 3-phosphate and glycerone phosphate from D-glucose: step 2/4. Its function is as follows. Catalyzes the reversible isomerization of glucose-6-phosphate to fructose-6-phosphate. The sequence is that of Glucose-6-phosphate isomerase from Burkholderia pseudomallei (strain 1106a).